We begin with the raw amino-acid sequence, 335 residues long: MIQFQRLHKSYSVDGRQIVALHPLDLRIGPGEVFGIIGHSGAGKSTLIRLINRLEEPSGGRLLIGEEDVTALDRQGLRALRRRIGMIFQHFNLLSSRTVAGNVAFPLELAGTPRAEIDARVAELLARVGLQEHANKYPAQLSGGQKQRVGIARALATRPQILLCDEATSALDPQTTASVLQLLAQINRELGLTIVLITHEMDVIRRVCDRVAVLDAGKLVETGPVTEVFLHPKHATTRRFVSEAEHVDEAELHRDFAAVGGRIVRLTFLGNGTYEPVLGRIARETGVDYNILSGRVDRIKDTPYGQLIVALTGGDHNAARAGFVAAGVQVEELRV.

The ABC transporter domain occupies 2 to 241; that stretch reads IQFQRLHKSY…PKHATTRRFV (240 aa). 38–45 provides a ligand contact to ATP; sequence GHSGAGKS.

Belongs to the ABC transporter superfamily. Methionine importer (TC 3.A.1.24) family. In terms of assembly, the complex is composed of two ATP-binding proteins (MetN), two transmembrane proteins (MetI) and a solute-binding protein (MetQ).

It is found in the cell inner membrane. The enzyme catalyses L-methionine(out) + ATP + H2O = L-methionine(in) + ADP + phosphate + H(+). It carries out the reaction D-methionine(out) + ATP + H2O = D-methionine(in) + ADP + phosphate + H(+). Functionally, part of the ABC transporter complex MetNIQ involved in methionine import. Responsible for energy coupling to the transport system. This chain is Methionine import ATP-binding protein MetN, found in Xanthomonas axonopodis pv. citri (strain 306).